Reading from the N-terminus, the 159-residue chain is Phosphopantetheine adenylyltransferase (159 aa).

Threonine 10 lines the substrate pocket. Residues 10 to 11 (TF) and histidine 18 each bind ATP. 3 residues coordinate substrate: lysine 42, methionine 74, and arginine 88. Residues 89-91 (GLR), glutamate 99, and 124-130 (WSFISSS) each bind ATP.

Belongs to the bacterial CoaD family. Homohexamer. The cofactor is Mg(2+).

The protein resides in the cytoplasm. The enzyme catalyses (R)-4'-phosphopantetheine + ATP + H(+) = 3'-dephospho-CoA + diphosphate. Its pathway is cofactor biosynthesis; coenzyme A biosynthesis; CoA from (R)-pantothenate: step 4/5. In terms of biological role, reversibly transfers an adenylyl group from ATP to 4'-phosphopantetheine, yielding dephospho-CoA (dPCoA) and pyrophosphate. This Salmonella paratyphi A (strain ATCC 9150 / SARB42) protein is Phosphopantetheine adenylyltransferase.